A 260-amino-acid chain; its full sequence is Phosphate import ATP-binding protein PstB (260 aa).

The region spanning Ile14–Ile255 is the ABC transporter domain. Gly46–Ser53 is a binding site for ATP.

The protein belongs to the ABC transporter superfamily. Phosphate importer (TC 3.A.1.7) family. The complex is composed of two ATP-binding proteins (PstB), two transmembrane proteins (PstC and PstA) and a solute-binding protein (PstS).

It is found in the cell inner membrane. The enzyme catalyses phosphate(out) + ATP + H2O = ADP + 2 phosphate(in) + H(+). Functionally, part of the ABC transporter complex PstSACB involved in phosphate import. Responsible for energy coupling to the transport system. This is Phosphate import ATP-binding protein PstB from Borreliella burgdorferi (strain ATCC 35210 / DSM 4680 / CIP 102532 / B31) (Borrelia burgdorferi).